We begin with the raw amino-acid sequence, 346 residues long: Alkylated DNA repair protein ALKBH8 homolog (346 aa).

The interval 1–21 (MVQPRFVRPTQSSPSSISGEP) is disordered. The span at 12–21 (SSPSSISGEP) shows a compositional bias: low complexity. Residues 24-102 (SNLYVANCGP…RSLHIRYSVL (79 aa)) form the RRM domain. One can recognise a Fe2OG dioxygenase domain in the interval 208–328 (NLDQLTVNEY…RVSFTLRKVR (121 aa)). Residues H226, D228, and H298 each coordinate Fe cation. 2-oxoglutarate-binding residues include R319 and R325.

It belongs to the alkB family. The cofactor is Fe(2+).

Its function is as follows. Binds tRNA and catalyzes the iron and alpha-ketoglutarate dependent hydroxylation of 5-methylcarboxymethyl uridine at the wobble position of the anticodon loop in tRNA via its dioxygenase domain, giving rise to 5-(S)-methoxycarbonylhydroxymethyluridine. The polypeptide is Alkylated DNA repair protein ALKBH8 homolog (Arabidopsis thaliana (Mouse-ear cress)).